A 33-amino-acid polypeptide reads, in one-letter code: MNAPARAAAKTAADALAAAKKTAADAAAAAAAA.

The protein belongs to the type-I AFP family.

Its function is as follows. Antifreeze proteins lower the blood freezing point. In Myoxocephalus scorpius (Shorthorn sculpin), this protein is Ice-structuring protein SS-3.